Here is a 396-residue protein sequence, read N- to C-terminus: Ribosomal RNA large subunit methyltransferase I (396 aa).

Residues 2 to 81 enclose the PUA domain; it reads SVRLVLAKGR…ESIDIAFFTR (80 aa).

The protein belongs to the methyltransferase superfamily. RlmI family.

It localises to the cytoplasm. It catalyses the reaction cytidine(1962) in 23S rRNA + S-adenosyl-L-methionine = 5-methylcytidine(1962) in 23S rRNA + S-adenosyl-L-homocysteine + H(+). Specifically methylates the cytosine at position 1962 (m5C1962) of 23S rRNA. The protein is Ribosomal RNA large subunit methyltransferase I of Escherichia coli (strain UTI89 / UPEC).